A 464-amino-acid chain; its full sequence is Argininosuccinate lyase (464 aa).

Belongs to the lyase 1 family. Argininosuccinate lyase subfamily.

Its subcellular location is the cytoplasm. The catalysed reaction is 2-(N(omega)-L-arginino)succinate = fumarate + L-arginine. The protein operates within amino-acid biosynthesis; L-arginine biosynthesis; L-arginine from L-ornithine and carbamoyl phosphate: step 3/3. This Alcanivorax borkumensis (strain ATCC 700651 / DSM 11573 / NCIMB 13689 / SK2) protein is Argininosuccinate lyase.